Reading from the N-terminus, the 215-residue chain is N-(5'-phosphoribosyl)anthranilate isomerase (215 aa).

It belongs to the TrpF family.

The catalysed reaction is N-(5-phospho-beta-D-ribosyl)anthranilate = 1-(2-carboxyphenylamino)-1-deoxy-D-ribulose 5-phosphate. It functions in the pathway amino-acid biosynthesis; L-tryptophan biosynthesis; L-tryptophan from chorismate: step 3/5. This chain is N-(5'-phosphoribosyl)anthranilate isomerase, found in Chlorobium phaeobacteroides (strain DSM 266 / SMG 266 / 2430).